The primary structure comprises 507 residues: MMAAAPIQQNGTHTGVPIDLDPPDSRKRPLEAPPEAGSTKRTNTGEDGQYFLKVLIPSYAAGSIIGKGGQTIVQLQKETGATIKLSKSKDFYPGTTERVCLIQGTIEALNAVHGFIAEKIREMPQNVAKTEPVSILQPQTTVNPDRIKQTLPSSPTTTKSSPSDPMTTSRANQVKIIVPNSTAGLIIGKGGATVKAIMEQSGAWVQLSQKPDGINLQERVVTVSGEPEQNRKAVELIIQKIQEDPQSGSCLNISYANVTGPVANSNPTGSPYANTAEVLPTAAAAAGLLGHANLAGVAAFPAVLSGFTGNDLVAITSALNTLASYGYNLNTLGLGLSQAAATGALAAAAASANPAAAAANLLATYASEASASGSTAGGTAGTFALGSLAAATAATNGYFGAASPLAASAILGTEKSTDGSKDVVEIAVPENLVGAILGKGGKTLVEYQELTGARIQISKKGEFVPGTRNRKVTITGTPAATQAAQYLITQRITYEQGVRAANPQKVG.

Residues 1–44 form a disordered region; it reads MMAAAPIQQNGTHTGVPIDLDPPDSRKRPLEAPPEAGSTKRTNT. The Bipartite nuclear localization signal motif lies at 27–43; sequence KRPLEAPPEAGSTKRTN. The KH 1 domain maps to 49–116; the sequence is QYFLKVLIPS…EALNAVHGFI (68 aa). The disordered stretch occupies residues 139–171; it reads QTTVNPDRIKQTLPSSPTTTKSSPSDPMTTSRA. The span at 150–169 shows a compositional bias: low complexity; it reads TLPSSPTTTKSSPSDPMTTS. The residue at position 154 (serine 154) is a Phosphoserine. 2 consecutive KH domains span residues 171 to 237 and 421 to 488; these read ANQV…VELI and KDVV…QYLI. The tract at residues 419–503 is required for RNA binding; the sequence is GSKDVVEIAV…YEQGVRAANP (85 aa).

Interacts with PTBP2; the interaction is direct. In terms of tissue distribution, expressed in neurons of the cortex, sub-cortex, cerebellum and brainstem (at protein level). Expressed in motor neurons, but not in glia.

Its subcellular location is the nucleus. In terms of biological role, functions to regulate alternative splicing in neurons by binding pre-mRNA in a sequence-specific manner to activate exon inclusion or exclusion. It binds specifically to the sequences 5'-YCAY-3' and regulates splicing in only a subset of regulated exons. Binding to an exonic 5'-YCAY-3' cluster changes the protein complexes assembled on pre-mRNA, blocking U1 snRNP binding and exon inclusion, whereas binding to an intronic 5'-YCAY-3' cluster enhances spliceosome assembly and exon inclusion. Binding to 5'-YCAY-3' clusters results in a local and asymmetric action to regulate spliceosome assembly and alternative splicing in neurons. Binding to an exonic 5'-YCAY-3' cluster changed the protein complexes assembled on pre-mRNA, blocking U1 snRNP (small nuclear ribonucleoprotein) binding and exon inclusion, whereas binding to an intronic 5'-YCAY-3' cluster enhanced spliceosome assembly and exon inclusion. With NOVA1, they perform unique biological functions in different brain areas and cell types. Autoregulates its own expression by acting as a splicing repressor. Acts to activate the inclusion of exon E3A in the glycine receptor alpha-2 chain and of exon E9 in gamma-aminobutyric-acid receptor gamma-2 subunit via a distal downstream UCAU-rich intronic splicing enhancer. Acts to regulate a novel glycine receptor alpha-2 chain splice variant (alpha-2N) in developing spinal cord. The polypeptide is RNA-binding protein Nova-1 (Mus musculus (Mouse)).